Here is a 505-residue protein sequence, read N- to C-terminus: Circadian clock protein KaiC3 (505 aa).

KaiC domains are found at residues 10–252 (EKLE…KSSD) and 253–485 (IRIT…LAGT). At serine 423 the chain carries Phosphoserine; by autocatalysis. Threonine 424 carries the phosphothreonine; by autocatalysis modification.

It belongs to the KaiC family. As to quaternary structure, multimerizes, probably forming homohexamers, no interaction with KaiC1 or KaiC2 is seen. In another study forms hexamers, interacts with KaiB1, KaiB3, and KaiC1. Post-translationally, autophosphorylates and dephosphorylates. Dephosphorylation of KaiC3 was higher at 25 than at 30 or 35 degrees Celsius.

It carries out the reaction L-seryl-[protein] + ATP = O-phospho-L-seryl-[protein] + ADP + H(+). It catalyses the reaction L-threonyl-[protein] + ATP = O-phospho-L-threonyl-[protein] + ADP + H(+). The enzyme catalyses ATP + H2O = ADP + phosphate + H(+). Its activity is regulated as follows. ATPase activity is influenced by KaiB1 and KaiB3 in vitro; ATPase is reduced 35% by the KaiB1 tetramer and 55% by the KaiB3 monomer but not affected by KaiA or the KaiB3 tetramer. Seems to be linked to dark adaption of Synechocystis cells, but is not as essential as the core oscillator KaiAB1C1 for the circadian cycle. KaiB3 and KaiC3 may cross talk with the core oscillator. Autophosphorylates and dephosphorylates independently of KaiA. Has a weak ATPase, hydrolyzes 8.5 ATP/monomer/day, has no detectable ATP synthesis activity. ATPase activity reduced 55% by KaiB3 monomer but not the KaiB3 tetramer or KaiA in vitro, reduced 35% by KaiB1 tetramer. The protein is Circadian clock protein KaiC3 of Synechocystis sp. (strain ATCC 27184 / PCC 6803 / Kazusa).